The sequence spans 298 residues: HTH-type transcriptional regulator ArgP (298 aa).

The region spanning leucine 4 to threonine 60 is the HTH lysR-type domain. The H-T-H motif DNA-binding region spans phenylalanine 21–lysine 40.

Belongs to the LysR transcriptional regulatory family. As to quaternary structure, homodimer.

In terms of biological role, controls the transcription of genes involved in arginine and lysine metabolism. The polypeptide is HTH-type transcriptional regulator ArgP (Vibrio vulnificus (strain CMCP6)).